A 361-amino-acid polypeptide reads, in one-letter code: tRNA-specific 2-thiouridylase MnmA (361 aa).

ATP is bound by residues 6 to 13 and isoleucine 32; that span reads LVSGGVDS. Positions 93–95 are interaction with target base in tRNA; it reads NPD. The Nucleophile role is filled by cysteine 98. A disulfide bridge connects residues cysteine 98 and cysteine 193. An ATP-binding site is contributed by glycine 121. The segment at 143 to 145 is interaction with tRNA; the sequence is KDQ. Cysteine 193 functions as the Cysteine persulfide intermediate in the catalytic mechanism.

The protein belongs to the MnmA/TRMU family.

Its subcellular location is the cytoplasm. It carries out the reaction S-sulfanyl-L-cysteinyl-[protein] + uridine(34) in tRNA + AH2 + ATP = 2-thiouridine(34) in tRNA + L-cysteinyl-[protein] + A + AMP + diphosphate + H(+). Its function is as follows. Catalyzes the 2-thiolation of uridine at the wobble position (U34) of tRNA, leading to the formation of s(2)U34. The chain is tRNA-specific 2-thiouridylase MnmA from Porphyromonas gingivalis (strain ATCC BAA-308 / W83).